Here is an 872-residue protein sequence, read N- to C-terminus: MESLLRFLALLLLRGAVAEGPAKKVLTLEGDLVLGGLFPVHQKGGPAEECGPVNEHRGIQRLEAMLFALDRINRDPHLLPGVRLGAHILDSCSKDTHALEQALDFVRASLSRGADGSRHICPDGSYATLSDAPTAITGVIGGSYSDVSIQVANLLRLFQIPQISYASTSAKLSDKSRYDYFARTVPPDFFQAKAMAEILRFFNWTYVSTVASEGDYGETGIEAFELEARARNICVATSEKVGRAMSRAAFEGVVRALLQKPSARVAVLFTRSEDARELLAATQRLNASFTWVASDGWGALESVVAGSERAAEGAITIELASYPISDFASYFQNLDPWNNSRNPWFREFWEERFRCSFRQRDCAAHSLRAVPFEQESKIMFVVNAVYAMAHALHNMHRALCPNTTRLCDAMRPVNGRRLYKDFVLNVKFDAPFRPADTDDEVRFDRFGDGIGRYNIFTYLRAGNGRYRYQKVGYWAEGLTLDTSIIPWASPSAGTLPASRCSEPCLQNEVKSVQPGEVCCWLCIPCQPYEYRLDEFTCADCGLGYWPNASLTGCFELPQEYIRWGDAWAVGPVTIACLGALATLFVLGVFVRHNATPVVKASGRELCYILLGGVFLCYCMTFIFIAKPSTAVCTLRRLGLGTAFSVCYSALLTKTNRIARIFGGAREGAQRPRFISPASQVAICLALISGQLLIVAAWLVVEAPGIGKETAPERREVVTLRCNHRDASMLGSLAYNVLLIALCTLYAFKTRKCPENFNEAKFIGFTMYTTCIIWLAFLPIFYVTSSDYRVQTTTMCVSVSLSGSVVLGCLFAPKLHIILFQPQKNVVSHRAPTSRFGSAAPRASANLGQGSGSQLVPTVCNGREVVDSTTSSL.

Positions 1–18 (MESLLRFLALLLLRGAVA) are cleaved as a signal peptide. Residues 19-568 (EGPAKKVLTL…EYIRWGDAWA (550 aa)) lie on the Extracellular side of the membrane. Cysteines 50 and 92 form a disulfide. L-glutamate-binding residues include arginine 57, arginine 61, serine 145, alanine 166, and threonine 168. Residues asparagine 203 and asparagine 286 are each glycosylated (N-linked (GlcNAc...) asparagine). Cystine bridges form between cysteine 234–cysteine 518, cysteine 355–cysteine 362, cysteine 400–cysteine 407, cysteine 500–cysteine 519, cysteine 504–cysteine 522, cysteine 525–cysteine 537, and cysteine 540–cysteine 553. Residue aspartate 295 coordinates L-glutamate. A glycan (N-linked (GlcNAc...) asparagine) is linked at asparagine 338. Position 377 (lysine 377) interacts with L-glutamate. Asparagine 402 is a glycosylation site (N-linked (GlcNAc...) asparagine). Asparagine 547 carries N-linked (GlcNAc...) asparagine glycosylation. The chain crosses the membrane as a helical span at residues 569 to 589 (VGPVTIACLGALATLFVLGVF). The Cytoplasmic portion of the chain corresponds to 590–604 (VRHNATPVVKASGRE). The chain crosses the membrane as a helical span at residues 605–625 (LCYILLGGVFLCYCMTFIFIA). The Extracellular portion of the chain corresponds to 626-633 (KPSTAVCT). A disulfide bridge connects residues cysteine 632 and cysteine 721. Residues 634 to 651 (LRRLGLGTAFSVCYSALL) form a helical membrane-spanning segment. The Cytoplasmic segment spans residues 652-679 (TKTNRIARIFGGAREGAQRPRFISPASQ). Positions 677–685 (ASQVAICLA) are important for interaction with HTR2A. Residues 680–700 (VAICLALISGQLLIVAAWLVV) form a helical membrane-spanning segment. The Extracellular segment spans residues 701–726 (EAPGIGKETAPERREVVTLRCNHRDA). A helical transmembrane segment spans residues 727–747 (SMLGSLAYNVLLIALCTLYAF). Residues 748–760 (KTRKCPENFNEAK) lie on the Cytoplasmic side of the membrane. A helical membrane pass occupies residues 761–781 (FIGFTMYTTCIIWLAFLPIFY). The Extracellular portion of the chain corresponds to 782 to 798 (VTSSDYRVQTTTMCVSV). The chain crosses the membrane as a helical span at residues 799-819 (SLSGSVVLGCLFAPKLHIILF). The Cytoplasmic portion of the chain corresponds to 820-872 (QPQKNVVSHRAPTSRFGSAAPRASANLGQGSGSQLVPTVCNGREVVDSTTSSL).

The protein belongs to the G-protein coupled receptor 3 family. As to quaternary structure, forms heterodimers with GRM3 or GRM4. Interacts with GNAI1. Interacts with TAMALIN. Interacts with HTR2A. Detected in neurons in brain cortex (at protein level).

It is found in the cell membrane. The protein resides in the synapse. The protein localises to the cell projection. It localises to the dendrite. In terms of biological role, dimeric G protein-coupled receptor which is activated by the excitatory neurotransmitter L-glutamate. Plays critical roles in modulating synaptic transmission and neuronal excitability. Upon activation by glutamate, inhibits presynaptic calcium channels, reducing further glutamate release and dampening excitatory signaling. Mechanistically, ligand binding causes a conformation change that triggers signaling via guanine nucleotide-binding proteins (G proteins) and modulates the activity of down-stream effectors, such as adenylate cyclase. May mediate suppression of neurotransmission or may be involved in synaptogenesis or synaptic stabilization. In Mus musculus (Mouse), this protein is Metabotropic glutamate receptor 2 (Grm2).